Reading from the N-terminus, the 664-residue chain is DNA ligase (664 aa).

NAD(+) contacts are provided by residues Asp32–Asp36 and Ser80–Leu81. Lys122 acts as the N6-AMP-lysine intermediate in catalysis. 3 residues coordinate NAD(+): Arg144, Glu178, and Lys314. Zn(2+) contacts are provided by Cys407, Cys410, Cys423, and Cys429. A BRCT domain is found at Ile587 to Lys664.

It belongs to the NAD-dependent DNA ligase family. LigA subfamily. Mg(2+) is required as a cofactor. The cofactor is Mn(2+).

It carries out the reaction NAD(+) + (deoxyribonucleotide)n-3'-hydroxyl + 5'-phospho-(deoxyribonucleotide)m = (deoxyribonucleotide)n+m + AMP + beta-nicotinamide D-nucleotide.. Its function is as follows. DNA ligase that catalyzes the formation of phosphodiester linkages between 5'-phosphoryl and 3'-hydroxyl groups in double-stranded DNA using NAD as a coenzyme and as the energy source for the reaction. It is essential for DNA replication and repair of damaged DNA. The protein is DNA ligase of Clostridium botulinum (strain 657 / Type Ba4).